A 201-amino-acid chain; its full sequence is RILP-like protein 2 (201 aa).

The RH1 domain maps to 14-108 (GPEIALDKDP…LKDGPQMGVG (95 aa)). The stretch at 67-155 (LEMLEALVNQ…AQDELQCYKS (89 aa)) forms a coiled coil. The region spanning 121–197 (RPRFTLQELR…TVKSLFSFKQ (77 aa)) is the RH2 domain. A disordered region spans residues 177-201 (SPRENESKEKSTVKSLFSFKQGKQT). The segment covering 179 to 188 (RENESKEKST) has biased composition (basic and acidic residues).

It belongs to the RILPL family.

It localises to the cytoplasm. It is found in the cytosol. The protein localises to the cytoskeleton. The protein resides in the microtubule organizing center. Its subcellular location is the centrosome. It localises to the cell projection. It is found in the cilium. Its function is as follows. Involved in cell shape and neuronal morphogenesis, positively regulating the establishment and maintenance of dendritic spines. Plays a role in cellular protein transport. This chain is RILP-like protein 2 (rilpl2), found in Xenopus tropicalis (Western clawed frog).